A 281-amino-acid chain; its full sequence is MIDTVTDLSRLRGIVADWRRQGLRVALVPTMGNLHAGHFSLVMLARHYADRVVSSVFVNPTQFGPHEDFQRYPRTPEADMRGLEHVGCDVLWLPSVETMYPLGTERTVRLFIPCVSDVLEGTFRPGHFEGVCTVVARLFNQVLPDVAVFGKKDYQQLVVIRQMVVDLAFPIEILGGCIVRESDGLAMSSRNQYLSMQQRPQAAEIHRTLIAMRDAVMSGGVHADVEAEAVRRLEAAGFQVDYAVIRLPDLCEPIDGIVISQGIALVAARLGNTRLIDNLEF.

31 to 38 (MGNLHAGH) contributes to the ATP binding site. The active-site Proton donor is H38. Q62 provides a ligand contact to (R)-pantoate. Q62 provides a ligand contact to beta-alanine. 150–153 (GKKD) lines the ATP pocket. Q156 is a (R)-pantoate binding site. ATP contacts are provided by residues V179 and 187–190 (MSSR).

This sequence belongs to the pantothenate synthetase family. As to quaternary structure, homodimer.

It is found in the cytoplasm. It carries out the reaction (R)-pantoate + beta-alanine + ATP = (R)-pantothenate + AMP + diphosphate + H(+). It functions in the pathway cofactor biosynthesis; (R)-pantothenate biosynthesis; (R)-pantothenate from (R)-pantoate and beta-alanine: step 1/1. Functionally, catalyzes the condensation of pantoate with beta-alanine in an ATP-dependent reaction via a pantoyl-adenylate intermediate. The sequence is that of Pantothenate synthetase from Xylella fastidiosa (strain M23).